The following is a 1000-amino-acid chain: Vacuolar protein-sorting protein bro1 (1000 aa).

The 402-residue stretch at 5–406 folds into the BRO1 domain; the sequence is PMISCPLKQT…EKVETADGEM (402 aa). A coiled-coil region spans residues 732-793; that stretch reads YAEMTETVDS…RQLMERLSTE (62 aa). 2 disordered regions span residues 760–857 and 891–1000; these read LLGQ…PYSQ and PIPA…NAWK. A compositionally biased stretch (basic and acidic residues) spans 764-792; it reads IEREKAAGTSDHEEREREKLRQLMERLST. Residues 840–849 show a composition bias toward polar residues; the sequence is VPQQHGTPVS. Composition is skewed to pro residues over residues 898–922 and 931–954; these read SPPP…PPVP and YVPP…PFPS. A compositionally biased stretch (polar residues) spans 981 to 991; sequence TGPSVSANSSD.

It belongs to the BRO1 family.

Its subcellular location is the cytoplasm. The protein resides in the endosome. In terms of biological role, involved in concentration and sorting of cargo proteins of the multivesicular body (MVB) for incorporation into intralumenal vesicles. The chain is Vacuolar protein-sorting protein bro1 (broA) from Emericella nidulans (strain FGSC A4 / ATCC 38163 / CBS 112.46 / NRRL 194 / M139) (Aspergillus nidulans).